A 401-amino-acid chain; its full sequence is Argininosuccinate synthase (401 aa).

10-18 is a binding site for ATP; the sequence is AYSGGVDTS. Tyr-89 lines the L-citrulline pocket. Position 119 (Gly-119) interacts with ATP. 3 residues coordinate L-aspartate: Thr-121, Asn-125, and Asp-126. Asn-125 serves as a coordination point for L-citrulline. 5 residues coordinate L-citrulline: Arg-129, Ser-177, Ser-186, Glu-262, and Tyr-274.

This sequence belongs to the argininosuccinate synthase family. Type 1 subfamily. Homotetramer.

It is found in the cytoplasm. The enzyme catalyses L-citrulline + L-aspartate + ATP = 2-(N(omega)-L-arginino)succinate + AMP + diphosphate + H(+). It participates in amino-acid biosynthesis; L-arginine biosynthesis; L-arginine from L-ornithine and carbamoyl phosphate: step 2/3. The sequence is that of Argininosuccinate synthase from Thermosynechococcus vestitus (strain NIES-2133 / IAM M-273 / BP-1).